The primary structure comprises 205 residues: Holliday junction branch migration complex subunit RuvA (205 aa).

The tract at residues 1-64 (MIGKLKGVVD…EDMIRLYGFR (64 aa)) is domain I. A domain II region spans residues 65–143 (SDAEREWFRL…AFAPVDPALV (79 aa)). A flexible linker region spans residues 144–152 (ALAGAVEEG). The segment at 153-205 (AAPQPVADAVSALVNLGYPQVQAAAAIAAALKGAGEGAEAKVLIRLGLRELAR) is domain III.

Belongs to the RuvA family. As to quaternary structure, homotetramer. Forms an RuvA(8)-RuvB(12)-Holliday junction (HJ) complex. HJ DNA is sandwiched between 2 RuvA tetramers; dsDNA enters through RuvA and exits via RuvB. An RuvB hexamer assembles on each DNA strand where it exits the tetramer. Each RuvB hexamer is contacted by two RuvA subunits (via domain III) on 2 adjacent RuvB subunits; this complex drives branch migration. In the full resolvosome a probable DNA-RuvA(4)-RuvB(12)-RuvC(2) complex forms which resolves the HJ.

It is found in the cytoplasm. Its function is as follows. The RuvA-RuvB-RuvC complex processes Holliday junction (HJ) DNA during genetic recombination and DNA repair, while the RuvA-RuvB complex plays an important role in the rescue of blocked DNA replication forks via replication fork reversal (RFR). RuvA specifically binds to HJ cruciform DNA, conferring on it an open structure. The RuvB hexamer acts as an ATP-dependent pump, pulling dsDNA into and through the RuvAB complex. HJ branch migration allows RuvC to scan DNA until it finds its consensus sequence, where it cleaves and resolves the cruciform DNA. In Methylobacterium radiotolerans (strain ATCC 27329 / DSM 1819 / JCM 2831 / NBRC 15690 / NCIMB 10815 / 0-1), this protein is Holliday junction branch migration complex subunit RuvA.